The chain runs to 198 residues: Putative nitroreductase MJ1384 (198 aa).

It belongs to the nitroreductase family. The cofactor is FMN.

The protein is Putative nitroreductase MJ1384 of Methanocaldococcus jannaschii (strain ATCC 43067 / DSM 2661 / JAL-1 / JCM 10045 / NBRC 100440) (Methanococcus jannaschii).